Here is a 143-residue protein sequence, read N- to C-terminus: AP-2 complex subunit sigma (143 aa).

Belongs to the adaptor complexes small subunit family. In terms of assembly, adaptor protein complex 2 (AP-2) is a heterotetramer composed of two large adaptins (alpha-type subunit APL3 and beta-type subunit APL1), a medium chain (mu-type subunit APM4) and a small adaptin (sigma-type subunit APS2).

The protein localises to the cell membrane. The protein resides in the membrane. It localises to the coated pit. Functionally, component of the adaptor complexes which link clathrin to receptors in coated vesicles. Clathrin-associated protein complexes are believed to interact with the cytoplasmic tails of membrane proteins, leading to their selection and concentration. This Neurospora crassa (strain ATCC 24698 / 74-OR23-1A / CBS 708.71 / DSM 1257 / FGSC 987) protein is AP-2 complex subunit sigma (aps-2).